A 558-amino-acid chain; its full sequence is Two-component response regulator-like APRR5 (558 aa).

The 119-residue stretch at 51-169 (RVLLVEADDS…ELRNLWQHVW (119 aa)) folds into the Response regulatory domain. A disordered region spans residues 180–233 (FPWNESVGQQKAEGASANNSNGKRDDHVVSGNGGDAQSSCTRPEMEGESADVEV). The stretch at 240–260 (QMECAKSQFNETRLLANELQS) forms a coiled coil. 2 disordered regions span residues 297–319 (SLRR…HPSS) and 535–558 (KKLA…TQAP). A compositionally biased stretch (polar residues) spans 303–319 (ASENQSSGDRPSLHPSS). Residues 509-551 (REAALTKFRMKRKDRCYEKKVRYESRKKLAEQRPRIKGQFVRQ) enclose the CCT domain.

It belongs to the ARR-like family. In terms of assembly, interacts with ADO1 and ADO2. Interacts with SPY (via N-terminus). In terms of processing, phosphorylation varies throughout the diurnal cycle and enhances ADO1 binding. O-fucosylated by SPY. O-fucosylation promotes APRR5 proteolysis.

The protein resides in the nucleus. Functionally, transcriptional repressor of CCA1 and LHY, thereby controlling photoperiodic flowering response. Involved in the positive and negative feedback loops of the circadian clock. With RVE8, forms a negative feedback loop of the circadian clock. Expression of several members of the ARR-like family is controlled by circadian rhythm. Proteolytic substrate of the E3 ubiquitin ligase SCF(ADO1) complex. APRR9, APRR7, and APRR5 coordinately act on the upstream region of the target genes to repress their expression from noon until midnight. The particular coordinated sequential expression of APRR9, APRR7, APRR5, APRR3 and APPR1 result to circadian waves that may be at the basis of the endogenous circadian clock. Negative regulator of shade avoidance response. Involved in the inhibition of leaf expansion in shade avoidance response. The chain is Two-component response regulator-like APRR5 (APRR5) from Arabidopsis thaliana (Mouse-ear cress).